Consider the following 457-residue polypeptide: ATP synthase subunit beta (457 aa).

147–154 contacts ATP; sequence GGAGVGKT.

This sequence belongs to the ATPase alpha/beta chains family. F-type ATPases have 2 components, CF(1) - the catalytic core - and CF(0) - the membrane proton channel. CF(1) has five subunits: alpha(3), beta(3), gamma(1), delta(1), epsilon(1). CF(0) has three main subunits: a(1), b(2) and c(9-12). The alpha and beta chains form an alternating ring which encloses part of the gamma chain. CF(1) is attached to CF(0) by a central stalk formed by the gamma and epsilon chains, while a peripheral stalk is formed by the delta and b chains.

Its subcellular location is the cell inner membrane. It carries out the reaction ATP + H2O + 4 H(+)(in) = ADP + phosphate + 5 H(+)(out). Produces ATP from ADP in the presence of a proton gradient across the membrane. The catalytic sites are hosted primarily by the beta subunits. The sequence is that of ATP synthase subunit beta from Haemophilus influenzae (strain PittEE).